The sequence spans 278 residues: Para-Rep C1 (278 aa).

The 95-residue stretch at 1–95 folds into the CRESS-DNA virus Rep endonuclease domain; that stretch reads MACSNWVFTR…VAGPWSYGDL (95 aa). Positions 8-11 match the RCR-1 motif; the sequence is FTRN. The a divalent metal cation site is built by Glu33 and His39. The RCR-2 motif lies at 39 to 41; that stretch reads HIQ. The Nuclear localization signal signature appears at 48–69; sequence KKARFSTVKEIIGGNPHVEKMK. The active-site For DNA cleavage activity is Tyr78. An RCR-3 motif is present at residues 78-81; it reads YVQK. An a divalent metal cation-binding site is contributed by Glu83. The Nuclear localization signal motif lies at 95–101; it reads LLKRGSH. ATP is bound at residue 176-178; it reads GKS.

The protein belongs to the nanoviridea/circoviridae replication-associated protein family. Homooligomer (Potential). Rep binds to repeated DNA motifs (iterons). Mg(2+) serves as cofactor. Mn(2+) is required as a cofactor.

The protein localises to the host nucleus. The catalysed reaction is ATP + H2O = ADP + phosphate + H(+). Initiates and terminates the replication only of its own subviral DNA molecule. The closed circular ssDNA genome is first converted to a superhelical dsDNA. Rep binds a specific hairpin at the genome origin of replication. Introduces an endonucleolytic nick within the intergenic region of the genome, thereby initiating the rolling circle replication (RCR). Following cleavage, binds covalently to the 5'-phosphate of DNA as a tyrosyl ester. The cleavage gives rise to a free 3'-OH that serves as a primer for the cellular DNA polymerase. The polymerase synthesizes the (+) strand DNA by rolling circle mechanism. After one round of replication, a Rep-catalyzed nucleotidyl transfer reaction releases a circular single-stranded virus genome, thereby terminating the replication. Displays origin-specific DNA cleavage, nucleotidyl transferase, ATPase and helicase activities. In Faba bean necrotic yellows C1 alphasatellite (FBNYC1A), this protein is Para-Rep C1 (C1).